An 816-amino-acid chain; its full sequence is S-layer protein (816 aa).

The signal sequence occupies residues 1 to 29; the sequence is MAKTNSYKKVIAGTMTAAMVAGVVSPVAA. SLH domains lie at 30 to 93, 94 to 150, and 152 to 215; these read AGKS…DAKP, SFAD…KVNG, and PATK…VAKV. Residues 403-480 enclose the BIG2 domain; that stretch reads FTSKDFKQND…TVKDSKGKEL (78 aa).

It is found in the secreted. Its subcellular location is the cell wall. It localises to the S-layer. In terms of biological role, the S-layer is a paracrystalline mono-layered assembly of proteins which coat the surface of bacteria. The sequence is that of S-layer protein from Bacillus thuringiensis subsp. finitimus.